Reading from the N-terminus, the 448-residue chain is Zinc finger CCCH domain-containing protein 43 (448 aa).

The interval 1–106 (MVNSEEIADG…GWSENESENV (106 aa)) is disordered. Residues 24–45 (SSHDRSLSDLNHAAEDLSDKLK) show a composition bias toward basic and acidic residues. The segment covering 63-79 (VSESNGGLDSNAVVTIN) has biased composition (polar residues). The segment covering 80-89 (QEEEEEEEDR) has biased composition (acidic residues). 5 C3H1-type zinc fingers span residues 110-138 (RPGA…HPLA), 158-186 (KLGL…HTIP), 204-232 (RPGE…HPDP), 346-374 (RPDQ…HPKN), and 392-420 (RPDQ…HSVQ). A disordered region spans residues 424-448 (STESSQAIVEPPQVSANGNESDGWN). Polar residues predominate over residues 437 to 448 (VSANGNESDGWN).

The protein resides in the nucleus. The polypeptide is Zinc finger CCCH domain-containing protein 43 (Arabidopsis thaliana (Mouse-ear cress)).